Here is a 389-residue protein sequence, read N- to C-terminus: Chalcone synthase 9 (389 aa).

C164 is a catalytic residue.

It belongs to the thiolase-like superfamily. Chalcone/stilbene synthases family.

The enzyme catalyses (E)-4-coumaroyl-CoA + 3 malonyl-CoA + 3 H(+) = 2',4,4',6'-tetrahydroxychalcone + 3 CO2 + 4 CoA. The protein operates within secondary metabolite biosynthesis; flavonoid biosynthesis. Its function is as follows. The primary product of this enzyme is 4,2',4',6'-tetrahydroxychalcone (also termed naringenin-chalcone or chalcone) which can under specific conditions spontaneously isomerize into naringenin. This chain is Chalcone synthase 9 (CHS9), found in Daucus carota (Wild carrot).